The chain runs to 443 residues: Probable glycine dehydrogenase (decarboxylating) subunit 1 (443 aa).

It belongs to the GcvP family. N-terminal subunit subfamily. The glycine cleavage system is composed of four proteins: P, T, L and H. In this organism, the P 'protein' is a heterodimer of two subunits.

It carries out the reaction N(6)-[(R)-lipoyl]-L-lysyl-[glycine-cleavage complex H protein] + glycine + H(+) = N(6)-[(R)-S(8)-aminomethyldihydrolipoyl]-L-lysyl-[glycine-cleavage complex H protein] + CO2. Its function is as follows. The glycine cleavage system catalyzes the degradation of glycine. The P protein binds the alpha-amino group of glycine through its pyridoxal phosphate cofactor; CO(2) is released and the remaining methylamine moiety is then transferred to the lipoamide cofactor of the H protein. The polypeptide is Probable glycine dehydrogenase (decarboxylating) subunit 1 (Solidesulfovibrio magneticus (strain ATCC 700980 / DSM 13731 / RS-1) (Desulfovibrio magneticus)).